A 206-amino-acid polypeptide reads, in one-letter code: Outer-membrane lipoprotein carrier protein (206 aa).

The first 23 residues, 1–23 (MKPLFPMLTAAAIAAGLAAPAQA), serve as a signal peptide directing secretion.

The protein belongs to the LolA family. As to quaternary structure, monomer.

The protein localises to the periplasm. Its function is as follows. Participates in the translocation of lipoproteins from the inner membrane to the outer membrane. Only forms a complex with a lipoprotein if the residue after the N-terminal Cys is not an aspartate (The Asp acts as a targeting signal to indicate that the lipoprotein should stay in the inner membrane). This is Outer-membrane lipoprotein carrier protein from Chromobacterium violaceum (strain ATCC 12472 / DSM 30191 / JCM 1249 / CCUG 213 / NBRC 12614 / NCIMB 9131 / NCTC 9757 / MK).